A 225-amino-acid polypeptide reads, in one-letter code: Putative ankyrin repeat protein RBE_1025 (225 aa).

ANK repeat units lie at residues 6-35 (LSKD…AINP), 41-71 (NGKT…NVNI), 75-120 (TGFT…DVNI), and 124-153 (KGNT…SPFI).

In Rickettsia bellii (strain RML369-C), this protein is Putative ankyrin repeat protein RBE_1025.